The chain runs to 129 residues: uncharacterized protein (129 aa).

Residues 52-94 are disordered; the sequence is NGDEESQDDWLNDLLKSDGDGGKAGPVDPSHPMETTTTDHSSQ. Residues 53–62 are compositionally biased toward acidic residues; that stretch reads GDEESQDDWL. Residues 84–94 show a composition bias toward polar residues; it reads METTTTDHSSQ.

This is an uncharacterized protein from Caenorhabditis elegans.